A 149-amino-acid polypeptide reads, in one-letter code: Large ribosomal subunit protein bL9 (149 aa).

The protein belongs to the bacterial ribosomal protein bL9 family.

Binds to the 23S rRNA. This Bacillus pumilus (strain SAFR-032) protein is Large ribosomal subunit protein bL9.